Reading from the N-terminus, the 67-residue chain is Large ribosomal subunit protein bL35 (67 aa).

A disordered region spans residues 22–52 (VLAGPGKKRHNLSARSQKAKRQNRGSQVLTH). Residues 27–44 (GKKRHNLSARSQKAKRQN) are compositionally biased toward basic residues.

Belongs to the bacterial ribosomal protein bL35 family.

The chain is Large ribosomal subunit protein bL35 from Granulibacter bethesdensis (strain ATCC BAA-1260 / CGDNIH1).